The primary structure comprises 474 residues: UDP-N-acetylmuramate--L-alanine ligase (474 aa).

115 to 121 serves as a coordination point for ATP; it reads GTHGKTT.

Belongs to the MurCDEF family.

It localises to the cytoplasm. The catalysed reaction is UDP-N-acetyl-alpha-D-muramate + L-alanine + ATP = UDP-N-acetyl-alpha-D-muramoyl-L-alanine + ADP + phosphate + H(+). It participates in cell wall biogenesis; peptidoglycan biosynthesis. Its function is as follows. Cell wall formation. The sequence is that of UDP-N-acetylmuramate--L-alanine ligase from Novosphingobium aromaticivorans (strain ATCC 700278 / DSM 12444 / CCUG 56034 / CIP 105152 / NBRC 16084 / F199).